The primary structure comprises 2419 residues: Telomere-associated protein RIF1 (2419 aa).

Disordered stretches follow at residues 1-24 and 373-408; these read MTAPGRSPLEPLLETWEDPSVPPG and SIPSPQGNSSRGSASPGLSPLTPGHKGASPYGSPRG. The span at 373–385 shows a compositional bias: polar residues; that stretch reads SIPSPQGNSSRGS. Residues Ser-385, Ser-391, Ser-779, Ser-976, and Ser-1005 each carry the phosphoserine modification. Thr-1044 is modified (phosphothreonine). The segment covering 1184–1198 has biased composition (low complexity); that stretch reads SSSTETSVVSSSSVS. 2 disordered regions span residues 1184–1594 and 1613–1637; these read SSST…QAVP and RVILQDSAGPADSLQAPPKGEEKSK. Composition is skewed to polar residues over residues 1199–1217 and 1228–1255; these read NATFSGTPPQPTSRRQTFI and RPFSPSPLNNISSTVTVRNNQDNTTNTD. Residue Thr-1215 is modified to Phosphothreonine. Residues Ser-1231 and Ser-1233 each carry the phosphoserine modification. Residues 1263–1272 show a composition bias toward basic and acidic residues; that stretch reads REVTNSKSDS. Over residues 1289-1302 the composition is skewed to polar residues; the sequence is AEQSVTKKSKPSLT. Positions 1323–1345 are enriched in basic and acidic residues; it reads HVSENDDHPSEATLEHKDGDPKP. Ser-1407, Ser-1439, Ser-1457, and Ser-1498 each carry phosphoserine. Over residues 1416 to 1455 the composition is skewed to basic and acidic residues; it reads SQERESGQQKKERRKEEEKIISKSPLRIKDDKLPTQKLTD. Polar residues predominate over residues 1457 to 1467; that stretch reads SPIQENLTEKG. A Phosphothreonine modification is found at Thr-1504. A compositionally biased stretch (basic and acidic residues) spans 1507-1516; that stretch reads NLDKSSEKPL. Over residues 1525 to 1537 the composition is skewed to polar residues; sequence RRASQGLISAVEN. A phosphoserine mark is found at Ser-1528, Ser-1538, Ser-1540, Ser-1542, and Ser-1550. Residues 1551-1560 show a composition bias toward basic residues; it reads RKKRSGKWKN. Ser-1562 and Ser-1565 each carry phosphoserine. The segment covering 1572 to 1581 has biased composition (basic and acidic residues); that stretch reads EEKKAEEEVM. Residues Ser-1680 and Ser-1683 each carry the phosphoserine modification. The residue at position 1780 (Thr-1780) is a Phosphothreonine. Ser-1784 is modified (phosphoserine). The interval 1812 to 1836 is disordered; it reads ASEAVSEIQGPCSENHSPAEDPGLS. Position 1842 is a phosphoserine (Ser-1842). An interaction with condensed chromosomes in telophase region spans residues 1882 to 2419; sequence DAFVAADSEK…RWRSPAHENS (538 aa). Disordered stretches follow at residues 1890 to 1914 and 1929 to 1983; these read EKSTQMDVSVDVATEEDNKKDECEA and FNSG…AQMS. Phosphoserine is present on residues Ser-1931, Ser-2094, Ser-2109, Ser-2121, Ser-2125, Ser-2144, Ser-2153, Ser-2208, Ser-2287, Ser-2341, Ser-2413, and Ser-2419. Positions 2119 to 2394 are interaction with ERCC6; it reads VWSPLASPST…TGSQLFEMHE (276 aa). The segment at 2182–2212 is disordered; that stretch reads SPIIKSVKTSPTSHSKHNTTSAKGFLSPGSQ. Positions 2189-2212 are enriched in polar residues; sequence KTSPTSHSKHNTTSAKGFLSPGSQ.

Belongs to the RIF1 family. In terms of assembly, interacts with TP53BP1 (when phosphorylated by ATM). May interact with TRF2. Interacts with SHLD2. Interacts with ERCC6 (via WHD region). Interacts with ASTE1. As to expression, expressed in Sertoli cells, prospermatagonia, early primary spermatocytes, and in oocytes at all stages of their growth. Expressed in embryonic stem (ES) and embryonic germ (EG) cells: expression is lost upon differentiation.

It localises to the nucleus. Its subcellular location is the chromosome. The protein resides in the telomere. The protein localises to the cytoplasm. It is found in the cytoskeleton. It localises to the spindle. Key regulator of TP53BP1 that plays a key role in the repair of double-strand DNA breaks (DSBs) in response to DNA damage: acts by promoting non-homologous end joining (NHEJ)-mediated repair of DSBs. In response to DNA damage, interacts with ATM-phosphorylated TP53BP1. Interaction with TP53BP1 leads to dissociate the interaction between NUDT16L1/TIRR and TP53BP1, thereby unmasking the tandem Tudor-like domain of TP53BP1 and allowing recruitment to DNA DSBs. Once recruited to DSBs, RIF1 and TP53BP1 act by promoting NHEJ-mediated repair of DSBs. In the same time, RIF1 and TP53BP1 specifically counteract the function of BRCA1 by blocking DSBs resection via homologous recombination (HR) during G1 phase. Also required for immunoglobulin class-switch recombination (CSR) during antibody genesis, a process that involves the generation of DNA DSBs. Promotes NHEJ of dysfunctional telomeres. The protein is Telomere-associated protein RIF1 of Mus musculus (Mouse).